The sequence spans 96 residues: MPQPQQLPGPNADIWDWQMRGLCRGVDSSMFFHPDGERGRARAQREMRAKEMCRSCPVIAQCRSHALAVGEPYGIWGGLSESERELLLKRGIRRSA.

The 4Fe-4S Wbl-type domain occupies 22–86 (LCRGVDSSMF…GGLSESEREL (65 aa)). [4Fe-4S] cluster-binding residues include Cys23, Cys53, Cys56, and Cys62.

Belongs to the WhiB family. [4Fe-4S] cluster serves as cofactor. Post-translationally, the Fe-S cluster can be nitrosylated by nitric oxide (NO). In terms of processing, upon Fe-S cluster removal intramolecular disulfide bonds are formed.

It is found in the cytoplasm. Functionally, a redox-sensitive transcriptional regulator. Maintains intracellular redox homeostasis by regulating catabolic metabolism and polyketide biosynthesis. Regulates expression of the redox buffer ergothioneine (ERG). In concert with myothiol (MSH), another redox buffer, responds to low pH leading to acid resistance. The apo- but not holo-form probably binds DNA. The polypeptide is Redox-responsive transcriptional regulator WhiB3 (whiB3) (Mycolicibacterium smegmatis (strain ATCC 700084 / mc(2)155) (Mycobacterium smegmatis)).